The chain runs to 55 residues: MLYRNGLCFGFLQLQGLEDEFIEHMRQVAEYEKDLRYKKAAANFMKMHDQNWVGD.

This is an uncharacterized protein from Bacillus subtilis (strain 168).